The following is a 318-amino-acid chain: sn-1 stearoyl-lipid 9-desaturase (318 aa).

2 helical membrane passes run 56-76 and 80-100; these read VIFF…PQFF and AVGM…TLGF. The Histidine box-1 motif lies at 101–106; it reads HRCISH. Residues 117 to 137 form a helical membrane-spanning segment; the sequence is YIFVICGTLACQGGVFEWVGL. Residues 138-142 carry the Histidine box-2 motif; that stretch reads HRMHH. A helical transmembrane segment spans residues 201 to 221; it reads VALGLILFALGGWPFVIWGIF. The Histidine box-3 motif lies at 271–275; that stretch reads HHAYQ.

The protein belongs to the fatty acid desaturase type 2 family. Requires Fe(2+) as cofactor.

Its subcellular location is the cellular thylakoid membrane. It catalyses the reaction a 1-octadecanoyl 2-acyl-glycerolipid + 2 reduced [2Fe-2S]-[ferredoxin] + O2 + 2 H(+) = a 1-[(9Z)-octadecenoyl]-2-acyl-glycerolipid + 2 oxidized [2Fe-2S]-[ferredoxin] + 2 H2O. The protein operates within lipid metabolism; polyunsaturated fatty acid biosynthesis. Functionally, desaturase involved in fatty acid biosynthesis. Introduces a double bond at carbon 9 of stearoyl groups (18:0) attached to the sn-1 position of the glycerol moiety of membrane glycerolipids. Does not desaturate palmitic acid (16:0), palmitoleic acid (16:1) and cis-vaccenic acid (18:1). In Synechocystis sp. (strain ATCC 27184 / PCC 6803 / Kazusa), this protein is sn-1 stearoyl-lipid 9-desaturase.